The chain runs to 134 residues: UPF0412 protein YaaI (134 aa).

Positions 1–23 are cleaved as a signal peptide; the sequence is MRSVLTISVGLLFGLALSSVAHA.

The protein belongs to the UPF0412 family.

This chain is UPF0412 protein YaaI, found in Salmonella paratyphi A (strain ATCC 9150 / SARB42).